The sequence spans 271 residues: Phosphatidylglycerol--prolipoprotein diacylglyceryl transferase (271 aa).

The next 3 membrane-spanning stretches (helical) occupy residues 17–37, 63–83, and 95–115; these read LAIH…FFLA, ILFL…CLFY, and IFAV…VLVS. Residue Arg146 participates in a 1,2-diacyl-sn-glycero-3-phospho-(1'-sn-glycerol) binding. The next 3 membrane-spanning stretches (helical) occupy residues 182–202, 209–229, and 243–263; these read SQVY…WLYA, GQVS…AEFF, and MSMG…LWIW.

Belongs to the Lgt family.

The protein resides in the cell inner membrane. The catalysed reaction is L-cysteinyl-[prolipoprotein] + a 1,2-diacyl-sn-glycero-3-phospho-(1'-sn-glycerol) = an S-1,2-diacyl-sn-glyceryl-L-cysteinyl-[prolipoprotein] + sn-glycerol 1-phosphate + H(+). It participates in protein modification; lipoprotein biosynthesis (diacylglyceryl transfer). Functionally, catalyzes the transfer of the diacylglyceryl group from phosphatidylglycerol to the sulfhydryl group of the N-terminal cysteine of a prolipoprotein, the first step in the formation of mature lipoproteins. This is Phosphatidylglycerol--prolipoprotein diacylglyceryl transferase from Polaromonas naphthalenivorans (strain CJ2).